Here is a 641-residue protein sequence, read N- to C-terminus: Single-strand DNA endonuclease 1 (641 aa).

Positions 1-90 (MGVKNLWDIL…SLKLATYRRR (90 aa)) are N-domain. Residues 2–97 (GVKNLWDILE…RRRLGSISHA (96 aa)) form an XPG-N domain region. Mg(2+) is bound by residues Asp-30, Asp-76, Glu-144, Glu-146, Asp-165, Asp-167, and Asp-217. Residues 132-217 (MALGIPCLDG…ISLAVLLGSD (86 aa)) are XPG-I domain. I-domain stretches follow at residues 132 to 220 (MALG…DYSN) and 132 to 221 (MALG…YSNG). Residues 217 to 350 (DYSNGVNGFG…ILPKIAEREL (134 aa)) form a 5'-3' exonuclease domain region. Disordered regions lie at residues 428-448 (KGEE…QAAV) and 572-615 (VGSH…RVHH). Gly residues predominate over residues 580–590 (DGGGGGGGGVA).

This sequence belongs to the XPG/RAD2 endonuclease family. GEN subfamily. It depends on Mg(2+) as a cofactor. Highly expressed in shoot apical meristem (SAM) and young leaves. Expressed in roots, flag leaf and panicles.

It localises to the nucleus. In terms of biological role, single-stranded DNA endonuclease activity in vitro. May not be active as double-stranded DNA endonuclease. Endonuclease which cleaves flap structures at the junction between single-stranded DNA and double-stranded DNA with a specific cleavage site in the 5' overhang strand exactly one nucleotide 3' of the branch point. Structure- and sequence-specific nuclease that resolves holliday junctions (HJs) by symmetrically oriented incisions in two opposing strands near the junction point, thus leading to ligatable products; HJs are physical links between homologous DNA molecules that arise as central intermediary structures during homologous recombination and repair in meiotic and somatic cells. Probably involved in the resolution of toxic replication structures to ensure genome stability, and to maintain telomere integrity and replication. In Oryza sativa subsp. japonica (Rice), this protein is Single-strand DNA endonuclease 1.